Here is a 207-residue protein sequence, read N- to C-terminus: Guanylate kinase (207 aa).

Positions 4–184 constitute a Guanylate kinase-like domain; that stretch reads GTLYIVSAPS…ALMDFKAILR (181 aa). Residue 11 to 18 coordinates ATP; it reads APSGAGKS.

This sequence belongs to the guanylate kinase family.

The protein resides in the cytoplasm. It catalyses the reaction GMP + ATP = GDP + ADP. Essential for recycling GMP and indirectly, cGMP. The sequence is that of Guanylate kinase from Vibrio parahaemolyticus serotype O3:K6 (strain RIMD 2210633).